Here is a 259-residue protein sequence, read N- to C-terminus: Hydroxyacylglutathione hydrolase (259 aa).

His-56, His-58, Asp-60, His-61, His-112, Asp-133, and His-171 together coordinate Zn(2+).

This sequence belongs to the metallo-beta-lactamase superfamily. Glyoxalase II family. In terms of assembly, monomer. Requires Zn(2+) as cofactor.

The enzyme catalyses an S-(2-hydroxyacyl)glutathione + H2O = a 2-hydroxy carboxylate + glutathione + H(+). Its pathway is secondary metabolite metabolism; methylglyoxal degradation; (R)-lactate from methylglyoxal: step 2/2. In terms of biological role, thiolesterase that catalyzes the hydrolysis of S-D-lactoyl-glutathione to form glutathione and D-lactic acid. This Pseudomonas putida (strain W619) protein is Hydroxyacylglutathione hydrolase.